The following is a 204-amino-acid chain: Molybdenum cofactor guanylyltransferase (204 aa).

GTP is bound by residues Leu-12 to Gly-14, Lys-25, Asn-53, Asp-71, and Asp-101. A Mg(2+)-binding site is contributed by Asp-101.

This sequence belongs to the MobA family. Monomer. Mg(2+) is required as a cofactor.

Its subcellular location is the cytoplasm. The enzyme catalyses Mo-molybdopterin + GTP + H(+) = Mo-molybdopterin guanine dinucleotide + diphosphate. Functionally, transfers a GMP moiety from GTP to Mo-molybdopterin (Mo-MPT) cofactor (Moco or molybdenum cofactor) to form Mo-molybdopterin guanine dinucleotide (Mo-MGD) cofactor. In Ralstonia pickettii (strain 12J), this protein is Molybdenum cofactor guanylyltransferase.